Reading from the N-terminus, the 372-residue chain is GRASP65 homolog protein 1 (372 aa).

At Met1 the chain carries N-acetylmethionine. PDZ GRASP-type domains follow at residues 66 to 183 and 188 to 276; these read SGLR…WTPL and FTYH…YGFL. Residues 66 to 292 form a GRASP region; the sequence is SGLRIVWVDE…KHCPQQAQQQ (227 aa). At Ser155 the chain carries Phosphoserine. The segment at 312 to 372 is disordered; the sequence is VPSAFTAPPV…PPPQKQSSSD (61 aa).

In terms of assembly, homodimer. Interacts with BUG1 (via C-terminus), probably forming a heterooligomer consisting of a GRH1 dimer and a BUG1 dimer. Interacts with COPII coat components SEC23, SEC24, SFB2 and SFB3. N-terminal acetylation; by N-terminal acetyltransferase NatC.

The protein localises to the cytoplasm. It is found in the golgi apparatus. Its subcellular location is the cis-Golgi network membrane. Involved in the spindle assembly checkpoint. Involved in ER to Golgi vesicle-mediated transport by either facilitating USO1-dependent and -independent tethering or increasing target accuracy of fusion events of COPII-coated vesicles. The sequence is that of GRASP65 homolog protein 1 (GRH1) from Saccharomyces cerevisiae (strain ATCC 204508 / S288c) (Baker's yeast).